The following is a 288-amino-acid chain: ATP synthase gamma chain (288 aa).

Belongs to the ATPase gamma chain family. In terms of assembly, F-type ATPases have 2 components, CF(1) - the catalytic core - and CF(0) - the membrane proton channel. CF(1) has five subunits: alpha(3), beta(3), gamma(1), delta(1), epsilon(1). CF(0) has three main subunits: a, b and c.

It localises to the cell inner membrane. Functionally, produces ATP from ADP in the presence of a proton gradient across the membrane. The gamma chain is believed to be important in regulating ATPase activity and the flow of protons through the CF(0) complex. This is ATP synthase gamma chain from Rickettsia felis (strain ATCC VR-1525 / URRWXCal2) (Rickettsia azadi).